Reading from the N-terminus, the 348-residue chain is Phosphoribosylformylglycinamidine cyclo-ligase (348 aa).

This sequence belongs to the AIR synthase family.

It is found in the cytoplasm. It carries out the reaction 2-formamido-N(1)-(5-O-phospho-beta-D-ribosyl)acetamidine + ATP = 5-amino-1-(5-phospho-beta-D-ribosyl)imidazole + ADP + phosphate + H(+). It participates in purine metabolism; IMP biosynthesis via de novo pathway; 5-amino-1-(5-phospho-D-ribosyl)imidazole from N(2)-formyl-N(1)-(5-phospho-D-ribosyl)glycinamide: step 2/2. The chain is Phosphoribosylformylglycinamidine cyclo-ligase from Geobacter metallireducens (strain ATCC 53774 / DSM 7210 / GS-15).